Reading from the N-terminus, the 122-residue chain is Protein FAM223A (122 aa).

This sequence belongs to the FAM223 family.

This chain is Protein FAM223A (FAM223A), found in Homo sapiens (Human).